Consider the following 212-residue polypeptide: Pyridoxine/pyridoxamine 5'-phosphate oxidase (212 aa).

Substrate is bound by residues R8–Y11 and K66. FMN-binding positions include R61–K66, F76–T77, R82, K83, and Q105. The substrate site is built by Y123, R127, and S131. Residues Q140–S141 and W185 each bind FMN. R191 to H193 contacts substrate. R195 is an FMN binding site.

This sequence belongs to the pyridoxamine 5'-phosphate oxidase family. In terms of assembly, homodimer. Requires FMN as cofactor.

The catalysed reaction is pyridoxamine 5'-phosphate + O2 + H2O = pyridoxal 5'-phosphate + H2O2 + NH4(+). It catalyses the reaction pyridoxine 5'-phosphate + O2 = pyridoxal 5'-phosphate + H2O2. It participates in cofactor metabolism; pyridoxal 5'-phosphate salvage; pyridoxal 5'-phosphate from pyridoxamine 5'-phosphate: step 1/1. It functions in the pathway cofactor metabolism; pyridoxal 5'-phosphate salvage; pyridoxal 5'-phosphate from pyridoxine 5'-phosphate: step 1/1. Catalyzes the oxidation of either pyridoxine 5'-phosphate (PNP) or pyridoxamine 5'-phosphate (PMP) into pyridoxal 5'-phosphate (PLP). This Shewanella pealeana (strain ATCC 700345 / ANG-SQ1) protein is Pyridoxine/pyridoxamine 5'-phosphate oxidase.